The sequence spans 472 residues: Protein nucleotidyltransferase YdiU (472 aa).

Residues Gly-86, Gly-88, Arg-89, Lys-109, Asp-121, Gly-122, Arg-172, and Arg-179 each contribute to the ATP site. The active-site Proton acceptor is Asp-244. 2 residues coordinate Mg(2+): Asn-245 and Asp-254. Asp-254 lines the ATP pocket.

This sequence belongs to the SELO family. Mg(2+) is required as a cofactor. Mn(2+) serves as cofactor.

The enzyme catalyses L-seryl-[protein] + ATP = 3-O-(5'-adenylyl)-L-seryl-[protein] + diphosphate. It catalyses the reaction L-threonyl-[protein] + ATP = 3-O-(5'-adenylyl)-L-threonyl-[protein] + diphosphate. The catalysed reaction is L-tyrosyl-[protein] + ATP = O-(5'-adenylyl)-L-tyrosyl-[protein] + diphosphate. It carries out the reaction L-histidyl-[protein] + UTP = N(tele)-(5'-uridylyl)-L-histidyl-[protein] + diphosphate. The enzyme catalyses L-seryl-[protein] + UTP = O-(5'-uridylyl)-L-seryl-[protein] + diphosphate. It catalyses the reaction L-tyrosyl-[protein] + UTP = O-(5'-uridylyl)-L-tyrosyl-[protein] + diphosphate. Its function is as follows. Nucleotidyltransferase involved in the post-translational modification of proteins. It can catalyze the addition of adenosine monophosphate (AMP) or uridine monophosphate (UMP) to a protein, resulting in modifications known as AMPylation and UMPylation. In Ruegeria pomeroyi (strain ATCC 700808 / DSM 15171 / DSS-3) (Silicibacter pomeroyi), this protein is Protein nucleotidyltransferase YdiU.